Consider the following 530-residue polypeptide: MARLCTHTESGHYLMALDAGTGSVRAVIFDLQGKQIAVGQAEWQHLAVPDVPGSMEFDLAKNWQLACQCIRQALQKAAIPATAIAAVSACSMREGIVIYDSNGEPIWACANVDARAAHEVSELKELHDNTFEEEVYRCSGQTLALSAIPRLLWLAHHRPDIYHRASTVTMISDWMAFMLSGELAVDPSNAGTTGLLDLVTRNWKRSLLQMAGLRSDILSPVKETGTLLGHISQKAAEQCDLQAGTPVIVGGGDVQLGCLGLGVVRPAQTAVLGGTFWQQVVNLPAPVTDPNMNVRINPHVIPGMVQTESISFFTGLTMRWFRDAFCAEEKLIAERLGIDAYSLLEDMASRVPPGAYGVMPIFSDVMRFKRWYHAAPSFINLSIDPEKCNKATLFRALEENAAIVSACNLQQIAAFSGVQADSLVFAGGGSKGKLWSQILADVTGLTVHVPVVKEATALGCAIAAGVGVGVWSSLAETGEKLVRWDREHKPNPENFAVYQQAREKWQAVYQDQRALVDGGLTTSLWKAPGL.

It belongs to the FGGY kinase family.

The protein resides in the cytoplasm. The catalysed reaction is (S)-4,5-dihydroxypentane-2,3-dione + ATP = (2S)-2-hydroxy-3,4-dioxopentyl phosphate + ADP + H(+). Catalyzes the phosphorylation of autoinducer-2 (AI-2) to phospho-AI-2, which subsequently inactivates the transcriptional regulator LsrR and leads to the transcription of the lsr operon. Phosphorylates the ring-open form of (S)-4,5-dihydroxypentane-2,3-dione (DPD), which is the precursor to all AI-2 signaling molecules, at the C5 position. This is Autoinducer-2 kinase from Salmonella paratyphi B (strain ATCC BAA-1250 / SPB7).